The primary structure comprises 483 residues: Protein nucleotidyltransferase YdiU (483 aa).

ATP-binding residues include glycine 87, glycine 89, arginine 90, lysine 110, aspartate 122, glycine 123, arginine 173, and arginine 180. Aspartate 249 serves as the catalytic Proton acceptor. Asparagine 250 and aspartate 259 together coordinate Mg(2+). Aspartate 259 is a binding site for ATP.

This sequence belongs to the SELO family. Mg(2+) serves as cofactor. Requires Mn(2+) as cofactor.

The enzyme catalyses L-seryl-[protein] + ATP = 3-O-(5'-adenylyl)-L-seryl-[protein] + diphosphate. The catalysed reaction is L-threonyl-[protein] + ATP = 3-O-(5'-adenylyl)-L-threonyl-[protein] + diphosphate. It carries out the reaction L-tyrosyl-[protein] + ATP = O-(5'-adenylyl)-L-tyrosyl-[protein] + diphosphate. It catalyses the reaction L-histidyl-[protein] + UTP = N(tele)-(5'-uridylyl)-L-histidyl-[protein] + diphosphate. The enzyme catalyses L-seryl-[protein] + UTP = O-(5'-uridylyl)-L-seryl-[protein] + diphosphate. The catalysed reaction is L-tyrosyl-[protein] + UTP = O-(5'-uridylyl)-L-tyrosyl-[protein] + diphosphate. In terms of biological role, nucleotidyltransferase involved in the post-translational modification of proteins. It can catalyze the addition of adenosine monophosphate (AMP) or uridine monophosphate (UMP) to a protein, resulting in modifications known as AMPylation and UMPylation. The chain is Protein nucleotidyltransferase YdiU from Pectobacterium atrosepticum (strain SCRI 1043 / ATCC BAA-672) (Erwinia carotovora subsp. atroseptica).